Here is a 158-residue protein sequence, read N- to C-terminus: Large ribosomal subunit protein uL15 (158 aa).

Residues 1-13 (MKLNEIKDNEGST) show a composition bias toward basic and acidic residues. A disordered region spans residues 1 to 45 (MKLNEIKDNEGSTHSRKRLGRGIGSGSGKTGGRGVKGQKSRSGVA). Over residues 21–35 (RGIGSGSGKTGGRGV) the composition is skewed to gly residues.

Belongs to the universal ribosomal protein uL15 family. In terms of assembly, part of the 50S ribosomal subunit.

In terms of biological role, binds to the 23S rRNA. The sequence is that of Large ribosomal subunit protein uL15 from Rhizobium etli (strain CIAT 652).